The following is a 434-amino-acid chain: Ribosomal protein uS12 methylthiotransferase RimO (434 aa).

In terms of domain architecture, MTTase N-terminal spans 2-112 (AKIGFVSLGC…VLEAVQVVLP (111 aa)). Residues cysteine 11, cysteine 47, cysteine 76, cysteine 142, cysteine 146, and cysteine 149 each coordinate [4Fe-4S] cluster. In terms of domain architecture, Radical SAM core spans 128–365 (LTPRHYAYVK…LELQARVSLR (238 aa)). The 67-residue stretch at 368 to 434 (QRFVGKTLEV…DTYDLHGVQA (67 aa)) folds into the TRAM domain.

Belongs to the methylthiotransferase family. RimO subfamily. The cofactor is [4Fe-4S] cluster.

The protein resides in the cytoplasm. It carries out the reaction L-aspartate(89)-[ribosomal protein uS12]-hydrogen + (sulfur carrier)-SH + AH2 + 2 S-adenosyl-L-methionine = 3-methylsulfanyl-L-aspartate(89)-[ribosomal protein uS12]-hydrogen + (sulfur carrier)-H + 5'-deoxyadenosine + L-methionine + A + S-adenosyl-L-homocysteine + 2 H(+). Catalyzes the methylthiolation of an aspartic acid residue of ribosomal protein uS12. The polypeptide is Ribosomal protein uS12 methylthiotransferase RimO (Thermus thermophilus (strain ATCC 27634 / DSM 579 / HB8)).